A 118-amino-acid chain; its full sequence is Putative pterin-4-alpha-carbinolamine dehydratase (118 aa).

The protein belongs to the pterin-4-alpha-carbinolamine dehydratase family.

The catalysed reaction is (4aS,6R)-4a-hydroxy-L-erythro-5,6,7,8-tetrahydrobiopterin = (6R)-L-erythro-6,7-dihydrobiopterin + H2O. In Pseudomonas entomophila (strain L48), this protein is Putative pterin-4-alpha-carbinolamine dehydratase.